The sequence spans 257 residues: Deoxyribose-phosphate aldolase (257 aa).

D102 (proton donor/acceptor) is an active-site residue. K166 functions as the Schiff-base intermediate with acetaldehyde in the catalytic mechanism. Residue K198 is the Proton donor/acceptor of the active site.

This sequence belongs to the DeoC/FbaB aldolase family. DeoC type 2 subfamily.

It localises to the cytoplasm. The catalysed reaction is 2-deoxy-D-ribose 5-phosphate = D-glyceraldehyde 3-phosphate + acetaldehyde. It participates in carbohydrate degradation; 2-deoxy-D-ribose 1-phosphate degradation; D-glyceraldehyde 3-phosphate and acetaldehyde from 2-deoxy-alpha-D-ribose 1-phosphate: step 2/2. Functionally, catalyzes a reversible aldol reaction between acetaldehyde and D-glyceraldehyde 3-phosphate to generate 2-deoxy-D-ribose 5-phosphate. The protein is Deoxyribose-phosphate aldolase of Aeromonas salmonicida (strain A449).